Here is a 574-residue protein sequence, read N- to C-terminus: Sulfate adenylyltransferase (574 aa).

Residues 1-169 (MANPPHGGVL…IEAINKLNHY (169 aa)) are N-terminal. The interval 170–394 (DYVALRYTPA…LRESSPPRHT (225 aa)) is catalytic. Glutamine 197 serves as a coordination point for sulfate. Residues 197–200 (QTRN) and 291–294 (GRDH) contribute to the ATP site. Active-site residues include threonine 198, arginine 199, and asparagine 200. Position 199 (arginine 199) interacts with sulfate. A sulfate-binding site is contributed by alanine 295. Valine 333 is an ATP binding site. The interval 395-574 (QGFTIFLTGY…LETEGFFDRS (180 aa)) is allosteric regulation domain; adenylyl-sulfate kinase-like. 3'-phosphoadenylyl sulfate-binding positions include 434–437 (DTVR), arginine 451, 477–478 (IA), and arginine 516.

In the N-terminal section; belongs to the sulfate adenylyltransferase family. This sequence in the C-terminal section; belongs to the APS kinase family. Homohexamer. Dimer of trimers.

It localises to the cytoplasm. The enzyme catalyses sulfate + ATP + H(+) = adenosine 5'-phosphosulfate + diphosphate. Its pathway is sulfur metabolism; hydrogen sulfide biosynthesis; sulfite from sulfate: step 1/3. With respect to regulation, allosterically inhibited by 3'-phosphoadenosine 5'-phosphosulfate (PAPS). Catalyzes the first intracellular reaction of sulfate assimilation, forming adenosine-5'-phosphosulfate (APS) from inorganic sulfate and ATP. Plays an important role in sulfate activation as a component of the biosynthesis pathway of sulfur-containing amino acids. The polypeptide is Sulfate adenylyltransferase (Aspergillus fumigatus (strain ATCC MYA-4609 / CBS 101355 / FGSC A1100 / Af293) (Neosartorya fumigata)).